Here is a 3567-residue protein sequence, read N- to C-terminus: Sushi, von Willebrand factor type A, EGF and pentraxin domain-containing protein 1 (3567 aa).

The N-terminal stretch at 1 to 17 (MWSRLAFCCWALALVSG) is a signal peptide. The VWFA domain occupies 84-265 (ELVFLVDESS…LARRALHEDL (182 aa)). Asn187 carries N-linked (GlcNAc...) asparagine glycosylation. 3 Sushi domains span residues 377-436 (VHCP…FCRV), 437-496 (RTCP…RCVE), and 497-561 (RHCA…VCKD). 6 disulfide bridges follow: Cys379/Cys421, Cys407/Cys434, Cys439/Cys481, Cys467/Cys494, Cys499/Cys544, and Cys530/Cys559. HYR domains are found at residues 560–644 (KDVE…KVID) and 645–724 (VEPP…VIKG). A Sushi 4 domain is found at 725-789 (SPCEVPFTPV…YSTEWPDCAI (65 aa)). Intrachain disulfides connect Cys727–Cys769, Cys753–Cys787, Cys1196–Cys1207, Cys1201–Cys1216, Cys1218–Cys1227, Cys1234–Cys1245, Cys1239–Cys1254, Cys1256–Cys1265, Cys1272–Cys1283, Cys1277–Cys1292, Cys1294–Cys1303, Cys1310–Cys1321, Cys1315–Cys1330, Cys1332–Cys1341, Cys1348–Cys1359, Cys1353–Cys1368, Cys1370–Cys1379, Cys1386–Cys1397, Cys1391–Cys1406, and Cys1408–Cys1417. The 37-residue stretch at 1192–1228 (VFHECFLNPCHNSGTCQQLGRGYVCLCPPGYTGLKCE) folds into the EGF-like 1 domain. Positions 1230 to 1266 (DIDECSSLPCLNGGICRDQVGGFTCECSLGYSGQICE) constitute an EGF-like 2; calcium-binding domain. The 37-residue stretch at 1268–1304 (NINECISSPCLNKGTCTDGLASYRCTCVKGYMGVHCE) folds into the EGF-like 3; calcium-binding domain. In terms of domain architecture, EGF-like 4; calcium-binding spans 1306 to 1342 (DVNECQSSPCLNNAVCKDQVGGFSCKCPPGFLGTRCE). Residues 1344-1380 (NVDECLSQPCQNGATCKDGANSFRCQCPAGFTGTHCE) enclose the EGF-like 5; calcium-binding domain. The 37-residue stretch at 1382-1418 (NINECQSNPCRNQATCVDELNSYSCKCQPGFSGHRCE) folds into the EGF-like 6; calcium-binding domain. The 205-residue stretch at 1423–1627 (SGFNLDFEVS…VKVDSSSMFC (205 aa)) folds into the Pentraxin (PTX) domain. Sushi domains are found at residues 1628–1686 (SDCP…HCER) and 1687–1744 (IRCG…SCLD). Cystine bridges form between Cys1630–Cys1671, Cys1657–Cys1684, Cys1689–Cys1729, Cys1715–Cys1742, Cys1748–Cys1760, Cys1754–Cys1769, Cys1771–Cys1782, Cys1788–Cys1828, Cys1814–Cys1841, Cys1846–Cys1886, Cys1872–Cys1899, Cys1904–Cys1944, Cys1930–Cys1957, Cys1962–Cys2002, Cys1988–Cys2015, Cys2020–Cys2060, Cys2046–Cys2077, Cys2082–Cys2125, Cys2111–Cys2140, Cys2145–Cys2185, Cys2171–Cys2198, Cys2203–Cys2244, Cys2230–Cys2258, Cys2263–Cys2303, Cys2289–Cys2317, Cys2322–Cys2362, Cys2348–Cys2375, Cys2380–Cys2421, Cys2407–Cys2434, Cys2439–Cys2479, Cys2465–Cys2492, Cys2497–Cys2537, Cys2523–Cys2550, Cys2555–Cys2595, and Cys2581–Cys2607. Positions 1744 to 1783 (DVDECAVGSDCSEHASCLNTNGSYVCSCNPPYTGDGKNCA) constitute an EGF-like 7; calcium-binding domain. 14 Sushi domains span residues 1780 to 1843 (KNCA…SCEA), 1844 to 1901 (ISCG…VCEL), 1902 to 1959 (VKCS…SCQL), 1960 to 2017 (VSCG…QCLA), 2018 to 2079 (VSCD…RCIA), 2080 to 2142 (HFCE…QCIP), 2143 to 2200 (VRCG…TCHP), 2201 to 2260 (VSCN…SCTP), 2261 to 2319 (LNCG…KCVP), 2320 to 2377 (TKCA…ICKM), 2378 to 2436 (VLCP…ECVP), 2437 to 2494 (VECP…MCKP), 2495 to 2552 (IECP…SCDA), and 2553 to 2609 (IHCS…TCVP). The important for the interaction with integrin ITGA9:ITGB1 stretch occupies residues 2638–2645 (DMMEVPYL). 14 consecutive Sushi domains span residues 2660-2711 (NTKE…SCIS), 2712-2769 (IECD…RCEA), 2770-2827 (ISCS…MCIP), 2828-2885 (VDCG…SCMP), 2886-2943 (VRCP…VCKP), 2944-3001 (ATCG…SCLP), 3002-3057 (CRCS…LCEH), 3058-3115 (AQCG…TCEP), 3116-3174 (LSCG…TCSP), 3175-3234 (KKCP…SCIP), 3235-3292 (VVCG…VCRE), 3293-3350 (NRCE…LCKP), 3351-3409 (NPCP…RCEK), and 3410-3466 (ISCG…VCRA). Cystine bridges form between Cys2682–Cys2709, Cys2714–Cys2754, Cys2740–Cys2767, Cys2772–Cys2812, Cys2798–Cys2825, Cys2830–Cys2870, Cys2856–Cys2883, Cys2888–Cys2928, Cys2914–Cys2941, Cys2946–Cys2986, Cys2972–Cys2999, Cys3004–Cys3043, Cys3029–Cys3055, Cys3060–Cys3100, Cys3086–Cys3113, Cys3118–Cys3159, Cys3144–Cys3172, Cys3177–Cys3217, Cys3203–Cys3232, Cys3237–Cys3277, Cys3263–Cys3290, Cys3295–Cys3335, Cys3321–Cys3348, Cys3353–Cys3394, Cys3380–Cys3407, Cys3412–Cys3452, Cys3438–Cys3464, Cys3500–Cys3510, Cys3504–Cys3516, Cys3518–Cys3527, Cys3532–Cys3542, Cys3536–Cys3548, and Cys3550–Cys3559. EGF-like domains are found at residues 3496-3528 (EEPI…SRCH) and 3529-3560 (TATC…HDCS).

In terms of assembly, interacts (via Sushi domain 21) with ITGA9:ITGB1; thereby inhibits Ca(2+) intracellular signaling and as a result represses vasocontraction. Interacts (via Sushi domain 21) with ITGA4:ITGB1; thereby inhibits Ca(2+) intracellular signaling and as a result represses vasocontraction. Interacts with ANGPT1 and ANGPT2. Interacts with PEAR1 (via extracellular domain). Interacts with HSPG2, TLN1, FN1, COPA, CCT2, IQGAP1, LAMC1 and NID1. Interacts (via C-terminus) with TIE1. As to expression, expressed in the media layer of the arterial wall (at protein level). Highly expressed in lung and placenta, weakly expressed in the kidney, heart, brain and spleen. Also expressed in bone and periosteum, but not in cartilage and skeletal muscle.

It is found in the secreted. Its subcellular location is the nucleus. The protein resides in the cytoplasm. The protein localises to the membrane. Required for morphological development, cell alignment and migration of lymphatic endothelial cells during embryonic development, potentially via modulation of ANGPT2-TIE1 signaling and subsequent activation of FOXC2 transcription. Required for embryonic lymphatic vascular development, via mediating the correct formation of the first lymphovenous contact site and tight association of the lymphatic endothelium with the venous endothelium. Represses PRKCA-mediated L-type voltage-gated channel Ca(2+) influx and ROCK-mediated calcium sensitivity in vascular smooth muscle cells, via its interaction with integrins, thereby inhibiting vasocontraction. Promotes platelet activation, via its interaction with PEAR1 and subsequent activation of AKT/mTOR signaling. Plays a role in epidermal development and keratinocyte differentiation, independent of cell-cell adhesion. May play a role in initial cell attachment of stromal osteogenic cells. May promote myoblast cell adhesion when in the presence of integrin ITGA9:ITGB1. In Mus musculus (Mouse), this protein is Sushi, von Willebrand factor type A, EGF and pentraxin domain-containing protein 1 (Svep1).